A 279-amino-acid chain; its full sequence is ATP synthase gamma chain (279 aa).

Belongs to the ATPase gamma chain family. As to quaternary structure, F-type ATPases have 2 components, CF(1) - the catalytic core - and CF(0) - the membrane proton channel. CF(1) has five subunits: alpha(3), beta(3), gamma(1), delta(1), epsilon(1). CF(0) has three main subunits: a, b and c.

The protein localises to the cell membrane. Its function is as follows. Produces ATP from ADP in the presence of a proton gradient across the membrane. The gamma chain is believed to be important in regulating ATPase activity and the flow of protons through the CF(0) complex. The chain is ATP synthase gamma chain from Mycoplasma genitalium (strain ATCC 33530 / DSM 19775 / NCTC 10195 / G37) (Mycoplasmoides genitalium).